Consider the following 445-residue polypeptide: UPF0210 protein SPG_0223 (445 aa).

It belongs to the UPF0210 family. In terms of assembly, homodimer.

The protein is UPF0210 protein SPG_0223 of Streptococcus pneumoniae serotype 19F (strain G54).